Here is a 2188-residue protein sequence, read N- to C-terminus: Genome polyprotein (2188 aa).

Gly2 carries the N-myristoyl glycine; by host lipid modification. At 2 to 1503 (GAQVTRQQTG…HISRAFITLQ (1502 aa)) the chain is on the cytoplasmic side. N-acetylneuraminate is bound by residues Asp408, Arg412, Pro548, Asp549, Ile550, Arg834, Pro838, and Asn839. Active-site for protease 2A activity residues include His879 and Asp897. Residues Cys914 and Cys916 each contribute to the Zn(2+) site. The active-site For protease 2A activity is Cys968. Zn(2+) contacts are provided by Cys974 and His976. A membrane-binding region spans residues 1108 to 1180 (SESWLKKFTE…EHSCPTTERQ (73 aa)). Residues 1108-1246 (SESWLKKFTE…SPGTGKSVAS (139 aa)) are oligomerization. Residues 1129 to 1133 (SQKID) form an RNA-binding region. The region spanning 1212-1370 (EKKINNYIQF…YKDSNKLDMS (159 aa)) is the SF3 helicase domain. Position 1236-1243 (1236-1243 (GSPGTGKS)) interacts with ATP. Zn(2+) contacts are provided by Cys1376, Cys1389, and Cys1394. The segment at 1376 to 1394 (CKPDNCTPTNYKRCCPLIC) adopts a C4-type; degenerate zinc-finger fold. Residues 1421 to 1428 (EYRTRNST) are RNA-binding. Residues 1432-1437 (LEALFQ) form an oligomerization region. An intramembrane segment occupies 1504–1519 (AIATFVSIAGVVYVIY). The Cytoplasmic portion of the chain corresponds to 1520-2188 (KLFAGIQGPY…SLRRKWLDSF (669 aa)). At Tyr1529 the chain carries O-(5'-phospho-RNA)-tyrosine. The 179-residue stretch at 1549–1727 (GPGFDFAQAI…FAAMLLHSYF (179 aa)) folds into the Peptidase C3 domain. Active-site for protease 3C activity residues include His1588, Glu1619, and Cys1695. Residues 1954–2069 (GEIFAFDYTG…SYPHKIDPGL (116 aa)) form the RdRp catalytic domain. 2 residues coordinate Mg(2+): Asp1960 and Asp2055.

Belongs to the picornaviruses polyprotein family. As to quaternary structure, interacts with capsid protein VP1 and capsid protein VP3 to form heterotrimeric protomers. Interacts with capsid protein VP0, and capsid protein VP3 to form heterotrimeric protomers. Five protomers subsequently associate to form pentamers which serve as building blocks for the capsid. Interacts with capsid protein VP2, capsid protein VP3 and capsid protein VP4 following cleavage of capsid protein VP0. In terms of assembly, interacts with capsid protein VP1 and capsid protein VP3 in the mature capsid. As to quaternary structure, interacts with capsid protein VP0 and capsid protein VP1 to form heterotrimeric protomers. Five protomers subsequently associate to form pentamers which serve as building blocks for the capsid. Interacts with capsid protein VP4 in the mature capsid. Interacts with protein 2C; this interaction may be important for virion morphogenesis. Interacts with host IRF7. Interacts with capsid protein VP1 and capsid protein VP3. In terms of assembly, homodimer. As to quaternary structure, homohexamer; forms a hexameric ring structure with 6-fold symmetry characteristic of AAA+ ATPases. Interacts (via N-terminus) with host RTN3 (via reticulon domain); this interaction is important for viral replication. Interacts with capsid protein VP3; this interaction may be important for virion morphogenesis. Interacts with protein 3CD. In terms of assembly, homodimer. Interacts with host GBF1. Interacts (via GOLD domain) with host ACBD3 (via GOLD domain); this interaction allows the formation of a viral protein 3A/ACBD3 heterotetramer with a 2:2 stoichiometry, which will stimulate the recruitment of host PI4KB in order to synthesize PI4P at the viral RNA replication sites. As to quaternary structure, interacts with RNA-directed RNA polymerase. Interacts with host IFIH1/MDA5; this interaction inhibits host IFIH1. In terms of assembly, interacts with protein 3AB and with RNA-directed RNA polymerase. As to quaternary structure, interacts with Viral protein genome-linked and with protein 3CD. It depends on Mg(2+) as a cofactor. In terms of processing, specific enzymatic cleavages in vivo by the viral proteases yield processing intermediates and the mature proteins. Myristoylation is required for the formation of pentamers during virus assembly. Further assembly of 12 pentamers and a molecule of genomic RNA generates the provirion. Post-translationally, during virion maturation, immature virions are rendered infectious following cleavage of VP0 into VP4 and VP2. This maturation seems to be an autocatalytic event triggered by the presence of RNA in the capsid and it is followed by a conformational change infectious virion. In terms of processing, myristoylation is required during RNA encapsidation and formation of the mature virus particle. VPg is uridylylated by the polymerase into VPg-pUpU. This acts as a nucleotide-peptide primer for the genomic RNA replication.

It localises to the virion. The protein localises to the host cytoplasm. The protein resides in the host cytoplasmic vesicle membrane. Its subcellular location is the host nucleus. It catalyses the reaction a ribonucleoside 5'-triphosphate + H2O = a ribonucleoside 5'-diphosphate + phosphate + H(+). It carries out the reaction Selective cleavage of Tyr-|-Gly bond in the picornavirus polyprotein.. The catalysed reaction is RNA(n) + a ribonucleoside 5'-triphosphate = RNA(n+1) + diphosphate. The enzyme catalyses Selective cleavage of Gln-|-Gly bond in the poliovirus polyprotein. In other picornavirus reactions Glu may be substituted for Gln, and Ser or Thr for Gly.. Component of immature procapsids, which is cleaved into capsid proteins VP4 and VP2 after maturation. Allows the capsid to remain inactive before the maturation step. Its function is as follows. Forms an icosahedral capsid of pseudo T=3 symmetry with capsid proteins VP2 and VP3. The capsid is 300 Angstroms in diameter, composed of 60 copies of each capsid protein and enclosing the viral positive strand RNA genome. Capsid protein VP1 mainly forms the vertices of the capsid. Capsid protein VP1, together with VP3, interacts with host cell sialic acids to provide virion attachment to target host cells. This attachment induces virion internalization. After binding to its receptor, the capsid undergoes conformational changes. Capsid protein VP1 N-terminus (that contains an amphipathic alpha-helix) and capsid protein VP4 are externalized. Together, they shape a pore in the host membrane through which viral genome is translocated to host cell cytoplasm. Functionally, forms an icosahedral capsid of pseudo T=3 symmetry with capsid proteins VP2 and VP3. The capsid is 300 Angstroms in diameter, composed of 60 copies of each capsid protein and enclosing the viral positive strand RNA genome. In terms of biological role, forms an icosahedral capsid of pseudo T=3 symmetry with capsid proteins VP2 and VP3. The capsid is 300 Angstroms in diameter, composed of 60 copies of each capsid protein and enclosing the viral positive strand RNA genome. Capsid protein VP3, together with VP1, interacts with host cell sialic acids to provide virion attachment to target host cells. In addition, inhibits the phosphorylation and nuclear translocation of host IRF7 and thereby suppresses downstream interferon production. Lies on the inner surface of the capsid shell. After binding to the host receptor, the capsid undergoes conformational changes. Capsid protein VP4 is released, Capsid protein VP1 N-terminus is externalized, and together, they shape a pore in the host membrane through which the viral genome is translocated into the host cell cytoplasm. Its function is as follows. Cysteine protease that cleaves viral polyprotein and specific host proteins. It is responsible for the autocatalytic cleavage between the P1 and P2 regions, which is the first cleavage occurring in the polyprotein. Also cleaves the host translation initiation factor EIF4G1, in order to shut down the capped cellular mRNA translation. Inhibits the host nucleus-cytoplasm protein and RNA trafficking by cleaving host members of the nuclear pores. Counteracts stress granule formation probably by antagonizing its assembly or promoting its dissassembly. Also plays a role in the suppression of host innate immunity through cleavage of host TRAF3, a component of the signaling cascade required to produce type I interferons. Functionally, plays an essential role in the virus replication cycle by acting as a viroporin. Creates a pore in the host endoplasmic reticulum and as a consequence releases Ca2+ in the cytoplasm of infected cell. In turn, high levels of cytoplasmic calcium may trigger membrane trafficking and transport of viral ER-associated proteins to viroplasms, sites of viral genome replication. In terms of biological role, induces and associates with structural rearrangements of intracellular membranes. Displays RNA-binding, nucleotide binding and NTPase activities. May play a role in virion morphogenesis and viral RNA encapsidation by interacting with the capsid protein VP3. Localizes the viral replication complex to the surface of membranous vesicles. Together with protein 3CD binds the Cis-Active RNA Element (CRE) which is involved in RNA synthesis initiation. Acts as a cofactor to stimulate the activity of 3D polymerase, maybe through a nucleid acid chaperone activity. Its function is as follows. Localizes the viral replication complex to the surface of membranous vesicles. It inhibits host cell endoplasmic reticulum-to-Golgi apparatus transport and causes the disassembly of the Golgi complex, possibly through GBF1 interaction. This would result in depletion of MHC, trail receptors and IFN receptors at the host cell surface. Plays an essential role in viral RNA replication by recruiting ACBD3 and PI4KB at the viral replication sites, thereby allowing the formation of the rearranged membranous structures where viral replication takes place. Functionally, acts as a primer for viral RNA replication and remains covalently bound to viral genomic RNA. VPg is uridylylated prior to priming replication into VPg-pUpU. The oriI viral genomic sequence may act as a template for this. The VPg-pUpU is then used as primer on the genomic RNA poly(A) by the RNA-dependent RNA polymerase to replicate the viral genome. During genome replication, the VPg-RNA linkage is removed by the host TDP2, thereby accelerating replication. During the late stage of the replication cycle, host TDP2 is excluded from sites of viral RNA synthesis and encapsidation, allowing for the generation of progeny virions. In terms of biological role, involved in the viral replication complex and viral polypeptide maturation. It exhibits protease activity with a specificity and catalytic efficiency that is different from protease 3C. Protein 3CD lacks polymerase activity. Protein 3CD binds to the 5'UTR of the viral genome. Major viral protease that mediates proteolytic processing of the polyprotein. Cleaves host EIF5B, contributing to host translation shutoff. Also cleaves host PABPC1, contributing to host translation shutoff. Binds and inhibits host IFIH1/MDA5, thereby inhibiting the type-I IFN production and the establishment of the antiviral state. Cleaves host MAP3K7/TAK1, resulting in inhibition of TRAF6-triggered NF-kappa-B induction. Cleaves host TICAM1; this interaction allows the virus to disrupt host TLR3 signaling. Cleaves host IRF7, resulting in inhibition of type-I IFN production. Cleaves host NLRP1, triggers host N-glycine-mediated degradation of the autoinhibitory NLRP1 N-terminal fragment. Its function is as follows. Replicates the viral genomic RNA on the surface of intracellular membranes. May form linear arrays of subunits that propagate along a strong head-to-tail interaction called interface-I. Covalently attaches UMP to a tyrosine of VPg, which is used to prime RNA synthesis. The positive stranded RNA genome is first replicated at virus induced membranous vesicles, creating a dsRNA genomic replication form. This dsRNA is then used as template to synthesize positive stranded RNA genomes. ss(+)RNA genomes are either translated, replicated or encapsidated. The chain is Genome polyprotein from Human enterovirus D68 (EV68).